A 236-amino-acid chain; its full sequence is UPF0257 lipoprotein YnfC (236 aa).

The first 16 residues, 1–16 (MKYKLLPCLLAIFLTG), serve as a signal peptide directing secretion. Cys17 carries N-palmitoyl cysteine lipidation. Cys17 carries the S-diacylglycerol cysteine lipid modification.

The protein belongs to the UPF0257 family.

The protein localises to the cell membrane. In Escherichia coli O17:K52:H18 (strain UMN026 / ExPEC), this protein is UPF0257 lipoprotein YnfC.